We begin with the raw amino-acid sequence, 197 residues long: C4-dicarboxylate transport transcriptional regulatory protein DctR (197 aa).

In terms of domain architecture, Response regulatory spans 4–120; that stretch reads TVHIVDDEES…HIVDIALSAI (117 aa). 4-aspartylphosphate is present on Asp-53. The inter-domain linker stretch occupies residues 128–135; that stretch reads AEAQAREA. The HTH luxR-type domain maps to 136–197; the sequence is VAARRASLSA…RNIADLARMT (62 aa). Positions 160–179 form a DNA-binding region, H-T-H motif; it reads NKQIAERLGIAMRTVEVHRS.

Post-translationally, phosphorylated by DctS.

It is found in the cytoplasm. Its function is as follows. Member of the two-component regulatory system DctS/DctR involved in the transport of C4-dicarboxylates. DctR functions as a transcriptional repressor of genes for C4-dicarboxylate transport. This is C4-dicarboxylate transport transcriptional regulatory protein DctR (dctR) from Rhodobacter capsulatus (Rhodopseudomonas capsulata).